A 540-amino-acid polypeptide reads, in one-letter code: Chaperonin GroEL 1 (540 aa).

ATP is bound by residues 29–32 (TLGP), 86–90 (DGTTT), glycine 413, 477–479 (NAA), and aspartate 493.

Belongs to the chaperonin (HSP60) family. As to quaternary structure, forms a cylinder of 14 subunits composed of two heptameric rings stacked back-to-back. Interacts with the co-chaperonin GroES.

Its subcellular location is the cytoplasm. It carries out the reaction ATP + H2O + a folded polypeptide = ADP + phosphate + an unfolded polypeptide.. Its function is as follows. Together with its co-chaperonin GroES, plays an essential role in assisting protein folding. The GroEL-GroES system forms a nano-cage that allows encapsulation of the non-native substrate proteins and provides a physical environment optimized to promote and accelerate protein folding. This Salinispora arenicola (strain CNS-205) protein is Chaperonin GroEL 1.